The primary structure comprises 144 residues: Large ribosomal subunit protein uL13 (144 aa).

The protein belongs to the universal ribosomal protein uL13 family. As to quaternary structure, part of the 50S ribosomal subunit.

This protein is one of the early assembly proteins of the 50S ribosomal subunit, although it is not seen to bind rRNA by itself. It is important during the early stages of 50S assembly. This chain is Large ribosomal subunit protein uL13, found in Nitrosospira multiformis (strain ATCC 25196 / NCIMB 11849 / C 71).